A 206-amino-acid chain; its full sequence is Ribosome maturation factor RimM (206 aa).

The region spanning 113-206 (DDEYYWVDLI…RIDSNWPTEL (94 aa)) is the PRC barrel domain.

This sequence belongs to the RimM family. In terms of assembly, binds ribosomal protein uS19.

It localises to the cytoplasm. An accessory protein needed during the final step in the assembly of 30S ribosomal subunit, possibly for assembly of the head region. Essential for efficient processing of 16S rRNA. May be needed both before and after RbfA during the maturation of 16S rRNA. It has affinity for free ribosomal 30S subunits but not for 70S ribosomes. This Bordetella petrii (strain ATCC BAA-461 / DSM 12804 / CCUG 43448) protein is Ribosome maturation factor RimM.